Here is a 380-residue protein sequence, read N- to C-terminus: Probable inorganic pyrophosphatase (380 aa).

The Mg(2+) site is built by aspartate 198, aspartate 203, and aspartate 235.

It belongs to the PPase family. The cofactor is Mg(2+).

It carries out the reaction diphosphate + H2O = 2 phosphate + H(+). The sequence is that of Probable inorganic pyrophosphatase from Plasmodium falciparum (isolate 3D7).